The sequence spans 445 residues: Sodium/proton-dependent alanine carrier protein (445 aa).

9 helical membrane-spanning segments follow: residues 41–61, 103–123, 129–149, 159–179, 188–208, 249–269, 304–324, 349–369, and 375–395; these read IAYG…IGAA, AAII…SIAD, FGIP…FTIF, AEIV…AIIA, VFGL…GILG, AFSI…MILF, TLFP…FAFT, AFFA…VKTA, and MGDI…LLLF.

The protein belongs to the alanine or glycine:cation symporter (AGCS) (TC 2.A.25) family. The N-terminus is blocked.

Its subcellular location is the cell membrane. Its function is as follows. Mediates the active transport of alanine, driven by either an H(+) or Na(+) gradient. The sequence is that of Sodium/proton-dependent alanine carrier protein from Bacillus sp. (strain PS3).